Consider the following 246-residue polypeptide: Putative F-box/LRR-repeat protein 9 (246 aa).

The F-box domain occupies 18 to 65; that stretch reads YRNWAELPPELTSSILLRLGAIEILQNAQRVCKSWRRVCQDPSMWRKI.

The chain is Putative F-box/LRR-repeat protein 9 (FBL9) from Arabidopsis thaliana (Mouse-ear cress).